Consider the following 133-residue polypeptide: DNA-directed RNA polymerases I and III subunit RPAC2 (133 aa).

Residue M1 is modified to N-acetylmethionine. Residues 1-22 (MEEDQELERKMSGVKTSMAEGE) form a disordered region.

The protein belongs to the archaeal Rpo11/eukaryotic RPB11/RPC19 RNA polymerase subunit family. In terms of assembly, component of the RNA polymerase I and RNA polymerase III complexes consisting of at least 13 and 17 subunits, respectively. The transcriptionally active RNA polymerase III complex consists of a ten-subunit horseshoe-shaped catalytic core composed of POLR3A/RPC1, POLR3B/RPC2, POLR1C/RPAC1, POLR1D/RPAC2, POLR3K/RPC10, POLR2E/RPABC1, POLR2F/RPABC2, POLR2H/RPABC3, POLR2K/RPABC4 and POLR2L/RPABC5; a mobile stalk composed of two subunits POLR3H/RPC8 and CRCP/RPC9, protruding from the core and functioning primarily in transcription initiation; and additional subunits homologous to general transcription factors of the RNA polymerase II machinery, POLR3C/RPC3-POLR3F/RPC6-POLR3G/RPC7 heterotrimer required for transcription initiation and POLR3D/RPC4-POLR3E/RPC5 heterodimer involved in both transcription initiation and termination.

It localises to the nucleus. DNA-dependent RNA polymerase catalyzes the transcription of DNA into RNA using the four ribonucleoside triphosphates as substrates. Common component of RNA polymerases I and III which synthesize ribosomal RNA precursor pre-rRNA and short non-coding RNAs including 5S rRNA, snRNAs, tRNAs and miRNAs, respectively. This Bos taurus (Bovine) protein is DNA-directed RNA polymerases I and III subunit RPAC2 (POLR1D).